The sequence spans 819 residues: Regulator of G-protein signaling rgs-7 (819 aa).

Acidic residues predominate over residues 1 to 11 (MSDEDADEYDD). Disordered regions lie at residues 1–51 (MSDE…EMLW), 112–135 (GDDS…GYGS), and 149–259 (SSTY…HNNE). A compositionally biased stretch (polar residues) spans 32 to 44 (YQDTTESTGPSEA). Positions 112–124 (GDDSSFRSRDRFV) are enriched in basic and acidic residues. Residues 149–166 (SSTYSSSSEAHRLSSLRA) are compositionally biased toward low complexity. The span at 173-185 (QLTSTTTSFQPLS) shows a compositional bias: polar residues. The span at 213 to 223 (RMYRKNPKYRR) shows a compositional bias: basic residues. The span at 234-259 (SRLEESTSQESERAVTPESWMEHNNE) shows a compositional bias: basic and acidic residues. The C2 domain occupies 290–429 (KHKDIRGIIF…KASQVVGDPF (140 aa)). Disordered stretches follow at residues 515-594 (YRST…DDNG) and 617-640 (FTFS…EEDK). Composition is skewed to polar residues over residues 517 to 533 (STGS…NLLD), 559 to 568 (PSITTTTSEN), and 617 to 632 (FTFS…NLRQ). Residues 682 to 800 (SFESLLNNKF…LRDRLFLDLL (119 aa)) form the RGS domain.

As to quaternary structure, interacts with egl-30.

Inhibits signal transduction by increasing the GTPase activity of G protein alpha subunit egl-30 (G-alpha(q)), thereby driving it into its inactive GDP-bound form. May organize egl-30 into a stable multiprotein signaling complex, and thereby persistently inhibit egl-30 when triggered by calcium or phospholipids. The protein is Regulator of G-protein signaling rgs-7 (rgs-7) of Caenorhabditis elegans.